Here is a 1137-residue protein sequence, read N- to C-terminus: DENN domain-containing protein 2B (1137 aa).

Polar residues predominate over residues 1–12 (MTMTANKNSSIT). The disordered stretch occupies residues 1–99 (MTMTANKNSS…PTCPFKTASF (99 aa)). Phosphoserine occurs at positions 30 and 32. Over residues 32-43 (SPPPVLSPPRSP) the composition is skewed to pro residues. Positions 49-64 (DSETSACRYPSHSSSR) are enriched in polar residues. A compositionally biased stretch (pro residues) spans 73–92 (PAPSPQNPQDPSPDTSPPTC). Residue T231 is modified to Phosphothreonine. S233 carries the post-translational modification Phosphoserine. The interval 293 to 573 (KEQPGRGLPQ…HRLPRLPKRH (281 aa)) is disordered. Positions 324–348 (EEPAGGASVSAGSRAVGVAGVAGEA) are enriched in low complexity. T364 is modified (phosphothreonine). Position 368 is a phosphoserine (S368). Residues 368-380 (SPSSQRLPSKSSL) show a composition bias toward low complexity. Over residues 392 to 402 (RTFEYEADKNP) the composition is skewed to basic and acidic residues. Residues 401-447 (NPKSKPSNGLPPSPTPAAPPPLPSTPAPPVTRRPKKDMRGHRKSQSR) are interaction with ABL1. Positions 409–431 (GLPPSPTPAAPPPLPSTPAPPVT) are enriched in pro residues. Residues 432–446 (RRPKKDMRGHRKSQS) show a composition bias toward basic residues. Over residues 456 to 481 (SSLQSLYPSSPTENGTENQPKFGSKS) the composition is skewed to polar residues. T482 carries the post-translational modification Phosphothreonine. Positions 495–508 (LPKENPYEDVDLKS) are enriched in basic and acidic residues. Polar residues-rich tracts occupy residues 514–524 (KSQQLSENSLD) and 539–558 (SPPT…SGNW). Phosphoserine is present on S545. Residues 562–573 (KSHRLPRLPKRH) are compositionally biased toward basic residues. S574 and S622 each carry phosphoserine. Residues 641–661 (IETASLRDENSESESDSDDRF) are disordered. The uDENN domain occupies 698–846 (EYFVVVSLKK…PFPAPGKTIK (149 aa)). Residues 868 to 1001 (RLEHVDFECL…LQAALEQALE (134 aa)) form the cDENN domain. One can recognise a dDENN domain in the interval 1003–1096 (KNELISQDSD…QDRELRKCRA (94 aa)).

In terms of assembly, interacts with ITSN1 and GRB2. Isoform 1 interacts with the SH3 domain of ABL1. Phosphorylated. Phosphorylation decreases ITSN1 binding. Widely expressed with the exception of peripheral blood lymphocytes. Isoform 1 is expressed in several epithelial and fibroblast (including tumorigenic) but absent in lymphoid cell lines (at protein level). Isoform 3 is expressed in primary cell or weakly tumorigenic but not in tumorigenic cell lines (at protein level).

It is found in the cytoplasm. It localises to the cell cortex. The protein localises to the cell membrane. The protein resides in the recycling endosome. Its function is as follows. May be involved in cytoskeletal organization and tumorogenicity. Seems to be involved in a signaling transduction pathway leading to activation of MAPK1/ERK2. Plays a role in EGFR trafficking from recycling endosomes back to the cell membrane. Guanine nucleotide exchange factor (GEF) which may activate RAB9A and RAB9B. Promotes the exchange of GDP to GTP, converting inactive GDP-bound Rab proteins into their active GTP-bound form. Functionally, may block ERK2 activation stimulated by ABL1. May alter cell morphology and cell growth. The protein is DENN domain-containing protein 2B of Homo sapiens (Human).